Here is a 211-residue protein sequence, read N- to C-terminus: Probable endo-1,4-beta-xylanase 5 (211 aa).

The N-terminal stretch at 1 to 16 (MKVTAAFASLLLTAFA) is a signal peptide. In terms of domain architecture, GH11 spans 19 to 210 (APEPVLVSRS…GAGSASVTIS (192 aa)). Catalysis depends on glutamate 106, which acts as the Nucleophile. The Proton donor role is filled by glutamate 197.

This sequence belongs to the glycosyl hydrolase 11 (cellulase G) family.

It localises to the secreted. It carries out the reaction Endohydrolysis of (1-&gt;4)-beta-D-xylosidic linkages in xylans.. Its pathway is glycan degradation; xylan degradation. Functionally, endo-1,4-beta-xylanase involved in the hydrolysis of xylan, a major structural heterogeneous polysaccharide found in plant biomass representing the second most abundant polysaccharide in the biosphere, after cellulose. The sequence is that of Probable endo-1,4-beta-xylanase 5 (XYN5) from Aspergillus niger (strain ATCC MYA-4892 / CBS 513.88 / FGSC A1513).